A 428-amino-acid polypeptide reads, in one-letter code: Putative zinc metalloprotease SAS1196 (428 aa).

His21 is a binding site for Zn(2+). Glu22 is an active-site residue. Residue His25 participates in Zn(2+) binding. Transmembrane regions (helical) follow at residues 172-194 (FLTLFAGPLFNFILALVLFIGLA), 309-331 (GSTLIFTAVVGMLASIFTGGFSF), 352-374 (IISLIGYTALLSVNLGIMNLIPI), and 401-420 (TTIIAIGAIFMVVIMILVTW). The PDZ domain occupies 186 to 269 (ALVLFIGLAY…TKSVELTPKK (84 aa)).

It belongs to the peptidase M50B family. Zn(2+) serves as cofactor.

The protein resides in the cell membrane. In Staphylococcus aureus (strain MSSA476), this protein is Putative zinc metalloprotease SAS1196.